A 600-amino-acid polypeptide reads, in one-letter code: Elongation factor 4 (600 aa).

In terms of domain architecture, tr-type G spans 3–185; the sequence is KYIRNFSIIA…CLIHDIPHPQ (183 aa). GTP-binding positions include 15 to 20 and 132 to 135; these read DHGKST and NKID.

Belongs to the TRAFAC class translation factor GTPase superfamily. Classic translation factor GTPase family. LepA subfamily.

It localises to the cell inner membrane. It catalyses the reaction GTP + H2O = GDP + phosphate + H(+). Its function is as follows. Required for accurate and efficient protein synthesis under certain stress conditions. May act as a fidelity factor of the translation reaction, by catalyzing a one-codon backward translocation of tRNAs on improperly translocated ribosomes. Back-translocation proceeds from a post-translocation (POST) complex to a pre-translocation (PRE) complex, thus giving elongation factor G a second chance to translocate the tRNAs correctly. Binds to ribosomes in a GTP-dependent manner. The protein is Elongation factor 4 of Blochmanniella pennsylvanica (strain BPEN).